Consider the following 221-residue polypeptide: Deep sea actinoporin Cjtox II (221 aa).

The signal sequence occupies residues 1–19 (MNRLIIVCLVAAMIYSTIA). The propeptide occupies 20-42 (LPMKEDISNDERPISVNEEPVKK). Positions 96, 129, 147, 149, 175, 179, and 180 each coordinate phosphocholine. The interval 147–162 (SVPYDYNWYENWWNIK) is trp-rich region, which is important for the binding to lipid membrane. The short motif at 186–188 (KGD) is the Cell attachment site, crucial for protein stability element.

Belongs to the actinoporin family. Sea anemone subfamily. As to quaternary structure, octamer or nonamer in membranes. Monomer in the soluble state. As to expression, expressed in actinopharynx and in gastric filaments. Is not expressed in tentacles.

The protein resides in the secreted. It localises to the nematocyst. The protein localises to the target cell membrane. In terms of biological role, may be involved in digestion of prey. Pore-forming protein that forms cations-selective hydrophilic pores of around 1 nm and causes cytolysis. Pore formation is a multi-step process that involves specific recognition of membrane sphingomyelin (but neither cholesterol nor phosphatidylcholine) using aromatic rich region and adjacent phosphocholine (POC) binding site, firm binding to the membrane (mainly driven by hydrophobic interactions) accompanied by the transfer of the N-terminal region to the lipid-water interface and finally pore formation after oligomerization of monomers. Shows hemolytic activity on equine erythrocytes. Hemolysis is highly inhibited in presence of sphingomyelin, suggesting that this protein targets sphingomyelin. This Cribrinopsis japonica (Deep-sea anemone) protein is Deep sea actinoporin Cjtox II.